We begin with the raw amino-acid sequence, 1653 residues long: Protein TOPAZ1 (1653 aa).

Disordered regions lie at residues 1–94 (MRPP…TDLV), 284–303 (YSVEENNTGRKHRKKMKSGK), and 415–442 (ISSTVKSPSDGHHMEKRSPRGDLRSETE). Residues 63 to 78 (GREETEGDKLAKENGK) are compositionally biased toward basic and acidic residues. Basic and acidic residues predominate over residues 423–442 (SDGHHMEKRSPRGDLRSETE).

Restricted to testis, where it localizes to germ cells.

Its subcellular location is the cytoplasm. It localises to the cytosol. In terms of biological role, important for normal spermatogenesis and male fertility. Specifically required for progression to the post-meiotic stages of spermatocyte development. Seems to be necessary for normal expression levels of a number of testis-expressed gene transcripts, although its role in this process is unclear. This chain is Protein TOPAZ1, found in Mus musculus (Mouse).